The chain runs to 216 residues: Pathogenicity-related ORF2 (216 aa).

4 consecutive transmembrane segments (helical) span residues V6–V26, L55–F75, I157–M177, and F193–L213.

This sequence belongs to the FliP/MopC/SpaP family.

The protein resides in the cell membrane. In terms of biological role, important for pathogenicity. This Xanthomonas campestris pv. glycines protein is Pathogenicity-related ORF2.